Here is a 23-residue protein sequence, read N- to C-terminus: U1-poneritoxin-Da3b (23 aa).

The protein belongs to the non-disulfide-bridged peptide (NDBP) superfamily. Medium-length antimicrobial peptide (group 3) family. Ponericin-W subfamily. Expressed by the venom gland.

Its subcellular location is the secreted. The protein localises to the target cell membrane. In terms of biological role, may have antimicrobial properties, like most ant linear peptides. May act by disrupting the integrity of the bacterial cell membrane. The sequence is that of U1-poneritoxin-Da3b from Dinoponera australis (Giant neotropical hunting ant).